The chain runs to 471 residues: Siroheme synthase 1 (471 aa).

Residues Met-1–Leu-203 form a precorrin-2 dehydrogenase /sirohydrochlorin ferrochelatase region. Residues Glu-22–Ile-23 and Glu-43–Thr-44 each bind NAD(+). A Phosphoserine modification is found at Ser-128. The tract at residues Gly-215 to Ala-471 is uroporphyrinogen-III C-methyltransferase. Pro-224 is a binding site for S-adenosyl-L-methionine. Asp-247 acts as the Proton acceptor in catalysis. Residue Lys-269 is the Proton donor of the active site. S-adenosyl-L-methionine is bound by residues Gly-300–Asp-302, Ile-305, Thr-330–Ala-331, Met-382, and Gly-411.

The protein in the N-terminal section; belongs to the precorrin-2 dehydrogenase / sirohydrochlorin ferrochelatase family. It in the C-terminal section; belongs to the precorrin methyltransferase family.

The enzyme catalyses uroporphyrinogen III + 2 S-adenosyl-L-methionine = precorrin-2 + 2 S-adenosyl-L-homocysteine + H(+). It catalyses the reaction precorrin-2 + NAD(+) = sirohydrochlorin + NADH + 2 H(+). It carries out the reaction siroheme + 2 H(+) = sirohydrochlorin + Fe(2+). It functions in the pathway cofactor biosynthesis; adenosylcobalamin biosynthesis; precorrin-2 from uroporphyrinogen III: step 1/1. The protein operates within cofactor biosynthesis; adenosylcobalamin biosynthesis; sirohydrochlorin from precorrin-2: step 1/1. It participates in porphyrin-containing compound metabolism; siroheme biosynthesis; precorrin-2 from uroporphyrinogen III: step 1/1. Its pathway is porphyrin-containing compound metabolism; siroheme biosynthesis; siroheme from sirohydrochlorin: step 1/1. It functions in the pathway porphyrin-containing compound metabolism; siroheme biosynthesis; sirohydrochlorin from precorrin-2: step 1/1. In terms of biological role, multifunctional enzyme that catalyzes the SAM-dependent methylations of uroporphyrinogen III at position C-2 and C-7 to form precorrin-2 via precorrin-1. Then it catalyzes the NAD-dependent ring dehydrogenation of precorrin-2 to yield sirohydrochlorin. Finally, it catalyzes the ferrochelation of sirohydrochlorin to yield siroheme. This is Siroheme synthase 1 from Klebsiella pneumoniae subsp. pneumoniae (strain ATCC 700721 / MGH 78578).